We begin with the raw amino-acid sequence, 724 residues long: Solute carrier organic anion transporter family member 4C1 (724 aa).

Residues 1–105 (MKSAKGIENL…QCLQRCNTPG (105 aa)) are Cytoplasmic-facing. Phosphoserine occurs at positions 15, 16, 24, 26, and 28. The segment at 30–71 (IEVSALSSDPQRENSQPQELQKPQEPQKSPEPSLPSAPPNVS) is disordered. Positions 44–60 (SQPQELQKPQEPQKSPE) are enriched in low complexity. Residues 106–126 (GFLLHYCLLAVTQGIVVNGLV) traverse the membrane as a helical segment. Residues 127 to 145 (NISISTVEKRYEMKSSLTG) are Extracellular-facing. Residues 146–166 (LISSSYDISFCLLSLFVSFFG) traverse the membrane as a helical segment. The Cytoplasmic portion of the chain corresponds to 167–172 (ERGHKP). Residues 173-197 (RWLAFAAFMIGLGALVFSLPQFFSG) form a helical membrane-spanning segment. Residues 198–223 (EYKLGSLFEDTCVTTRNSTSCTSSTS) lie on the Extracellular side of the membrane. Residues 224–254 (SLSNYLYVFILGQLLLGAGGTPLYTLGTAFL) traverse the membrane as a helical segment. Residues 255 to 274 (DDSVPTHKSSLYIGTGYAMS) lie on the Cytoplasmic side of the membrane. The chain crosses the membrane as a helical span at residues 275–295 (ILGPAIGYVLGGQLLTIYIDV). At 296–311 (AMGESTDVTEDDPRWL) the chain is on the extracellular side. A helical transmembrane segment spans residues 312–336 (GAWWIGFLLSWIFAWSLIIPFSCFP). Residues 337–377 (KHLPGTAEIQAGKTSQAHQSNSNADVKFGKSIKDFPAALKN) lie on the Cytoplasmic side of the membrane. The chain crosses the membrane as a helical span at residues 378-399 (LMKNAVFMCLVLSTSSEALITT). The Extracellular segment spans residues 400–419 (GFATFLPKFIENQFGLTSSF). The chain crosses the membrane as a helical span at residues 420 to 443 (AATLGGAVLIPGAALGQILGGFLV). Residues 444–447 (SKFR) are Cytoplasmic-facing. The chain crosses the membrane as a helical span at residues 448 to 471 (MTCKNTMKFALFTSGVALTLSFVF). Residues 472–580 (MYAKCENEPF…ETHCAKLPIF (109 aa)) are Extracellular-facing. Residues 495 to 549 (GNLIAPCNANCNCSRSYYYPVCGDGVQYFSPCFAGCSNPVAHRKPKVYYNCSCIE) enclose the Kazal-like domain. Disulfide bonds link Cys-501–Cys-530, Cys-507–Cys-526, and Cys-516–Cys-547. The helical transmembrane segment at 581 to 603 (LCIFFIVIIFTFMAGTPITVSIL) threads the bilayer. At 604–612 (RCVNHRQRS) the chain is on the cytoplasmic side. Residues 613-638 (LALGIQFMVLRLLGTIPGPIIFGFTI) form a helical membrane-spanning segment. The Extracellular segment spans residues 639-672 (DSTCILWDINDCGIKGACWIYDNIKMAHMLVAIS). The chain crosses the membrane as a helical span at residues 673 to 690 (VTCKVITMFFNGFAIFLY). The Cytoplasmic segment spans residues 691–724 (KPPPSATDVSFHKENAVVTNVLAEQDLNKIVKEG).

Belongs to the organo anion transporter (TC 2.A.60) family. Predominantly expressed in kidney but also weakly expressed in both fetal liver and kidney.

It is found in the basolateral cell membrane. It carries out the reaction estrone 3-sulfate(out) = estrone 3-sulfate(in). The catalysed reaction is L-thyroxine(out) = L-thyroxine(in). The enzyme catalyses 3,3',5-triiodo-L-thyronine(out) = 3,3',5-triiodo-L-thyronine(in). It catalyses the reaction chenodeoxycholate(out) = chenodeoxycholate(in). It carries out the reaction glycocholate(out) = glycocholate(in). The catalysed reaction is L-homoarginine(in) = L-homoarginine(out). The enzyme catalyses L-arginine(in) = L-arginine(out). It catalyses the reaction N(omega),N(omega)-dimethyl-L-arginine(out) = N(omega),N(omega)-dimethyl-L-arginine(in). Functionally, mediates the transport of organic anions such as steroids (estrone 3-sulfate, chenodeoxycholate, glycocholate) and thyroid hormones (3,3',5-triiodo-L-thyronine (T3), L-thyroxine (T4)), in the kidney. Capable of transporting cAMP and pharmacological substances such as digoxin, ouabain and methotrexate. Transport is independent of sodium, chloride ion, and ATP. Transport activity is stimulated by an acidic extracellular environment due to increased substrate affinity to the transporter. The driving force for this transport activity is currently not known. The role of hydrogencarbonate (HCO3(-), bicarbonate) as the probable counteranion that exchanges for organic anions is still not well defined. Functions as an uptake transporter at the apical membrane, suggesting a role in renal reabsorption. Involved in the renal secretion of the uremic toxin ADMA (N(omega),N(omega)-dimethyl-L-arginine or asymmetrical dimethylarginine), which is associated to cardiovascular events and mortality, and the structurally related amino acids L-arginine and L-homoarginine (a cardioprotective biomarker). Can act bidirectionally, suggesting a dual protective role of this transport protein; exporting L-homoarginine after being synthesized in proximal tubule cells, and mediating uptake of ADMA from the blood into proximal tubule cells where it is degraded by the enzyme dimethylarginine dimethylaminohydrolase 1 (DDAH1). May be involved in sperm maturation by enabling directed movement of organic anions and compounds within or between cells. This ion-transporting process is important to maintain the strict epididymal homeostasis necessary for sperm maturation. May have a role in secretory functions since seminal vesicle epithelial cells are assumed to secrete proteins involved in decapacitation by modifying surface proteins to facilitate the acquisition of the ability to fertilize the egg. This chain is Solute carrier organic anion transporter family member 4C1, found in Homo sapiens (Human).